Reading from the N-terminus, the 220-residue chain is MEEEEHEVYGGEIPDVGEMDGDMEALNPDLDMAAADDDAVKELDEMKKRLKEMEDEAAALREMQAKVEKEMGAQDPASIAANQAGKEEVDARSVFVGNVDYACTPEEVQQHFQTCGTVHRVTILTDKFGQPKGFAYVEFVEVEAVQEALQLNESELHGRQLKVLQKRTNVPGLKQFRGRRFNPYMGYRFRRPFMSPYMYSPYGYGKAPRFRRPMRYMPYQ.

Residues 1–24 (MEEEEHEVYGGEIPDVGEMDGDME) are disordered. The stretch at 34–74 (AADDDAVKELDEMKKRLKEMEDEAAALREMQAKVEKEMGAQ) forms a coiled coil. Residues 78–219 (SIAANQAGKE…FRRPMRYMPY (142 aa)) are necessary for homooligomerization. Residues 92 to 168 (RSVFVGNVDY…RQLKVLQKRT (77 aa)) enclose the RRM domain. Residues 165-172 (QKRTNVPG) carry the Nuclear localization signal motif.

In terms of assembly, monomer and homooligomer. Binds RNA as a monomer and oligomerizes when bound to poly(A). Forms a complex with cleavage and polyadenylation specificity factor (CPSF) subunits PAPS2, FIPS5, PABN3 and PABN1. Interacts with CSP3.

Its subcellular location is the nucleus speckle. The protein resides in the cytoplasm. Functionally, involved in the 3'-end formation of mRNA precursors (pre-mRNA) by the addition of a poly(A) tail of 200-250 nt to the upstream cleavage product. Stimulates poly(A) polymerase (PAPOLA) conferring processivity on the poly(A) tail elongation reaction and also controls the poly(A) tail length. Increases the affinity of poly(A) polymerase for RNA. Binds to poly(A) and to poly(G) with high affinity. May protect the poly(A) tail from degradation. The chain is Polyadenylate-binding protein 2 from Arabidopsis thaliana (Mouse-ear cress).